Here is a 286-residue protein sequence, read N- to C-terminus: Small ribosomal subunit protein uS2 (286 aa).

A disordered region spans residues 231-286; sequence ERAQAEAKAAAGDNDAPVSSEGESTEVASDAASTASETTATSSDESAAESSEAESK. Residues 255–280 show a composition bias toward low complexity; that stretch reads TEVASDAASTASETTATSSDESAAES.

Belongs to the universal ribosomal protein uS2 family.

This chain is Small ribosomal subunit protein uS2, found in Corynebacterium kroppenstedtii (strain DSM 44385 / JCM 11950 / CIP 105744 / CCUG 35717).